Reading from the N-terminus, the 700-residue chain is Autophagy-related protein 13 (700 aa).

The tract at residues 319–352 is disordered; that stretch reads GSINSSSSPPPGATQSNQSVSSFSTSKPIPVTLN. Residues 332 to 344 show a composition bias toward low complexity; the sequence is TQSNQSVSSFSTS. Residues 399 to 407 form an ATG17-binding region; that stretch reads SSFGSRFRT. Positions 428–487 are ATG1-binding; sequence TPNNPILHNFRSRNKSPSVSSTELGPSSSIYMDDDLDSFMKMLDSKPDLRFPSNSPSVYE. Residues 506 to 532 are compositionally biased toward polar residues; sequence EQQQHGSPSSNQIMIHSQSQTSQSQVF. Disordered regions lie at residues 506–562, 576–637, and 649–700; these read EQQQ…PGVS, HASS…NPEL, and ESDD…NQEF. A compositionally biased stretch (low complexity) spans 595–631; sequence SSPPASATAVATVHNSLRRLTSSSQRTNTNSTNSSTR. The span at 656–667 shows a compositional bias: basic and acidic residues; the sequence is DEHSPRSTDTKS.

It belongs to the ATG13 family. Fungi subfamily. Hypophosphorylated form interacts with ATG1 to form the ATG1-ATG13 kinase complex. The ATG1-ATG13 complex interacts with the ATG17-ATG29-ATG31 complex through direct interaction with ATG17. Interacts with VAC8.

It localises to the cytoplasm. It is found in the preautophagosomal structure. In terms of biological role, activates the ATG1 kinase in a nutritional condition dependent manner through the TOR pathway, leading to autophagy. Involved in ATG9 and ATG23 cycling through the pre-autophagosomal structure. Also involved in cytoplasm to vacuole transport (Cvt) and more specifically in Cvt vesicle formation. Seems to play a role in the switching machinery regulating the conversion between the Cvt pathway and autophagy. Finally, ATG13 is also required for glycogen storage during stationary phase. Acts as a negative regulator of xylose alcoholic fermentation, a role that is not related to autophagy. This is Autophagy-related protein 13 from Ogataea parapolymorpha (strain ATCC 26012 / BCRC 20466 / JCM 22074 / NRRL Y-7560 / DL-1) (Yeast).